The chain runs to 328 residues: Cytochrome c biogenesis protein CcsA (328 aa).

8 consecutive transmembrane segments (helical) span residues isoleucine 13–leucine 33, glycine 46–glycine 66, leucine 73–phenylalanine 93, leucine 101–leucine 121, methionine 146–isoleucine 166, isoleucine 234–asparagine 254, tryptophan 263–isoleucine 283, and alanine 295–leucine 315.

This sequence belongs to the CcmF/CycK/Ccl1/NrfE/CcsA family. As to quaternary structure, may interact with Ccs1.

Its subcellular location is the plastid. The protein resides in the chloroplast thylakoid membrane. Functionally, required during biogenesis of c-type cytochromes (cytochrome c6 and cytochrome f) at the step of heme attachment. This is Cytochrome c biogenesis protein CcsA from Aethionema cordifolium (Lebanon stonecress).